The following is a 479-amino-acid chain: Ribosomal RNA small subunit methyltransferase F (479 aa).

S-adenosyl-L-methionine-binding positions include 125–131, Glu-149, Asp-176, and Asp-194; that span reads AAAPGSK. The Nucleophile role is filled by Cys-247.

It belongs to the class I-like SAM-binding methyltransferase superfamily. RsmB/NOP family.

Its subcellular location is the cytoplasm. The catalysed reaction is cytidine(1407) in 16S rRNA + S-adenosyl-L-methionine = 5-methylcytidine(1407) in 16S rRNA + S-adenosyl-L-homocysteine + H(+). Specifically methylates the cytosine at position 1407 (m5C1407) of 16S rRNA. The sequence is that of Ribosomal RNA small subunit methyltransferase F from Escherichia coli (strain SE11).